A 141-amino-acid polypeptide reads, in one-letter code: Terrelysin (141 aa).

This sequence belongs to the aegerolysin family.

The protein resides in the cytoplasm. Functionally, hemolysins are potential virulence factors. Has hemolytic activity against sheep erythrocytes in vitro. This is Terrelysin from Aspergillus terreus (strain NIH 2624 / FGSC A1156).